The primary structure comprises 142 residues: ATP synthase epsilon chain (142 aa).

This sequence belongs to the ATPase epsilon chain family. F-type ATPases have 2 components, CF(1) - the catalytic core - and CF(0) - the membrane proton channel. CF(1) has five subunits: alpha(3), beta(3), gamma(1), delta(1), epsilon(1). CF(0) has three main subunits: a, b and c.

The protein resides in the cell inner membrane. Functionally, produces ATP from ADP in the presence of a proton gradient across the membrane. The polypeptide is ATP synthase epsilon chain (Shewanella loihica (strain ATCC BAA-1088 / PV-4)).